Consider the following 186-residue polypeptide: PRA1 family protein G2 (186 aa).

4 helical membrane passes run 66–86 (YFFV…LITA), 87–107 (SPVA…FHFF), 119–139 (VGDR…IWFT), and 142–162 (AVNL…HAVF).

The protein belongs to the PRA1 family. As to expression, expressed in roots and trichomes.

The protein resides in the endoplasmic reticulum membrane. May be involved in both secretory and endocytic intracellular trafficking in the endosomal/prevacuolar compartments. This chain is PRA1 family protein G2 (PRA1G2), found in Arabidopsis thaliana (Mouse-ear cress).